The sequence spans 348 residues: EGF-like domain containing protein 1 (348 aa).

The signal sequence occupies residues 1–19 (MFYLSTFMTIVISLSLVSC). Residues 60-92 (TGSDCKVTCQNNGRCYDGNKCLCSSDYTGHLCE) form the EGF-like domain. 3 disulfides stabilise this stretch: Cys64-Cys74, Cys68-Cys80, and Cys82-Cys91. The region spanning 99-342 (RCTLDGVVFE…PTCAAPAVSQ (244 aa)) is the ZP domain.

Prismatic layer of shell (at protein level). Expressed primarily in the mantle with highest level in the mantle edge and lower level in the mantle pallium.

It localises to the secreted. The protein is EGF-like domain containing protein 1 of Margaritifera margaritifera (Freshwater pearl mussel).